The chain runs to 310 residues: Putative olfactory receptor 7A2 (310 aa).

Topologically, residues 1–26 (MVKAGNETQISEFLLLGFSEKQELQP) are extracellular. N-linked (GlcNAc...) asparagine glycosylation occurs at Asn6. The helical transmembrane segment at 27-47 (FLFGLFLSMYLVTVLGNLLII) threads the bilayer. The Cytoplasmic portion of the chain corresponds to 48-55 (LAAISDSC). A helical transmembrane segment spans residues 56-76 (LHTPMYFFLSNLSFVDICFAS). The Extracellular segment spans residues 77–100 (TMVPKMLVNIQTQSKVITYAGCIT). Cysteines 98 and 190 form a disulfide. A helical transmembrane segment spans residues 101–121 (QMCFFVLFIVLDSLLLTVMAY). Over 122 to 140 (DQFVAICHPLHYTVIMSPQ) the chain is Cytoplasmic. A helical membrane pass occupies residues 141–161 (LCGLLVLVSWIMSVLNSMLQS). Topologically, residues 162-198 (LVTLQLSFCTDLEIPHFFCELNEMIHLACSDTFVNNM) are extracellular. The chain crosses the membrane as a helical span at residues 199 to 218 (VMHFAAVLLDGGPLVGILYS). Residues 219 to 238 (YCRIVSSIRAISSTQGKYKA) are Cytoplasmic-facing. The chain crosses the membrane as a helical span at residues 239–259 (LSTCASHLSVVSIFYGTGLGV). At 260–272 (YLSSTMTQNLHST) the chain is on the extracellular side. The helical transmembrane segment at 273–293 (AVASVMYTVVTPMLNPFIYSL) threads the bilayer. Residues 294–310 (RNKDIKGALTQFFRGKQ) lie on the Cytoplasmic side of the membrane.

The protein belongs to the G-protein coupled receptor 1 family.

The protein localises to the cell membrane. Its function is as follows. Odorant receptor. This is Putative olfactory receptor 7A2 (OR7A2P) from Homo sapiens (Human).